A 29-amino-acid polypeptide reads, in one-letter code: Cytochrome b6-f complex subunit 8 (29 aa).

A helical transmembrane segment spans residues 3–23 (TVSLAWAALMVVFTFSLSLVV).

The protein belongs to the PetN family. The 4 large subunits of the cytochrome b6-f complex are cytochrome b6, subunit IV (17 kDa polypeptide, PetD), cytochrome f and the Rieske protein, while the 4 small subunits are PetG, PetL, PetM and PetN. The complex functions as a dimer.

It localises to the plastid. The protein localises to the chloroplast thylakoid membrane. In terms of biological role, component of the cytochrome b6-f complex, which mediates electron transfer between photosystem II (PSII) and photosystem I (PSI), cyclic electron flow around PSI, and state transitions. This chain is Cytochrome b6-f complex subunit 8, found in Chloranthus spicatus (Chulantree).